Here is a 508-residue protein sequence, read N- to C-terminus: tRNA (guanine(37)-N(1))-methyltransferase (508 aa).

Residues 1-53 (MKFNFWKGLWKPKSLTPTLSHRLYRRMYTPQPPLNREMTVLDRSKFTVSLNLA) constitute a mitochondrion transit peptide. Histidine 253 provides a ligand contact to S-adenosyl-L-methionine. Positions 267-284 (RERKQQERAKRENHEKST) are enriched in basic and acidic residues. The segment at 267–291 (RERKQQERAKRENHEKSTETAVEPD) is disordered. S-adenosyl-L-methionine is bound by residues 323 to 324 (DL), 351 to 352 (DG), and asparagine 402.

It belongs to the class I-like SAM-binding methyltransferase superfamily. TRM5/TYW2 family. In terms of assembly, monomer.

The protein resides in the mitochondrion matrix. The protein localises to the nucleus. Its subcellular location is the cytoplasm. The enzyme catalyses guanosine(37) in tRNA + S-adenosyl-L-methionine = N(1)-methylguanosine(37) in tRNA + S-adenosyl-L-homocysteine + H(+). Functionally, specifically methylates the N1 position of guanosine-37 in various cytoplasmic and mitochondrial tRNAs. Methylation is not dependent on the nature of the nucleoside 5' of the target nucleoside. This is the first step in the biosynthesis of wybutosine (yW), a modified base adjacent to the anticodon of tRNAs and required for accurate decoding. In Yarrowia lipolytica (strain CLIB 122 / E 150) (Yeast), this protein is tRNA (guanine(37)-N(1))-methyltransferase.